A 292-amino-acid polypeptide reads, in one-letter code: NAD kinase (292 aa).

D73 acts as the Proton acceptor in catalysis. NAD(+) contacts are provided by residues 73–74 (DG), 147–148 (NE), H158, R175, D177, 188–193 (TAYSLS), and Q247.

The protein belongs to the NAD kinase family. It depends on a divalent metal cation as a cofactor.

The protein resides in the cytoplasm. It carries out the reaction NAD(+) + ATP = ADP + NADP(+) + H(+). Involved in the regulation of the intracellular balance of NAD and NADP, and is a key enzyme in the biosynthesis of NADP. Catalyzes specifically the phosphorylation on 2'-hydroxyl of the adenosine moiety of NAD to yield NADP. This is NAD kinase from Edwardsiella ictaluri (strain 93-146).